A 101-amino-acid polypeptide reads, in one-letter code: MSSSRRSRTSSRLAAAPPPTDEQMAELISKLQAVLPTRGGEANAKQASSAEVLQEACRYIRRLHREADALSERLAELLLLQPSDLAINGADVPDLIRSLLM.

A disordered region spans residues 1–22 (MSSSRRSRTSSRLAAAPPPTDE). Residues 8–63 (RTSSRLAAAPPPTDEQMAELISKLQAVLPTRGGEANAKQASSAEVLQEACRYIRRL) form the bHLH domain.

This sequence belongs to the bHLH protein family.

Functionally, atypical and probable non DNA-binding bHLH transcription factor that integrates multiple signaling pathways to regulate cell elongation and plant development. The polypeptide is Transcription factor ILI2 (ILI2) (Oryza sativa subsp. indica (Rice)).